The sequence spans 296 residues: Probable cell wall protein PGA41 (296 aa).

An N-terminal signal peptide occupies residues 1–18 (MKFTIVLFTLISVTVAAA). The span at 146–212 (IASSTKESSS…ITTISSDSST (67 aa)) shows a compositional bias: low complexity. The tract at residues 146 to 276 (IASSTKESSS…PNSSQTAPGA (131 aa)) is disordered. Positions 220 to 245 (QGGGGNSGNNGSNGDGGNDASGGGGV) are enriched in gly residues. 2 N-linked (GlcNAc...) asparagine glycosylation sites follow: asparagine 229 and asparagine 268. The segment covering 247 to 274 (NENEQASSPPSSQSSTNSNQPNSSQTAP) has biased composition (low complexity). Glycine 275 carries the GPI-anchor amidated glycine lipid modification. Residues 276 to 296 (AANYLSSVSVGTLMILVLGLI) constitute a propeptide, removed in mature form.

This sequence belongs to the IHD1 family. In terms of processing, the GPI-anchor is attached to the protein in the endoplasmic reticulum and serves to target the protein to the cell surface. There, the glucosamine-inositol phospholipid moiety is cleaved off and the GPI-modified mannoprotein is covalently attached via its lipidless GPI glycan remnant to the 1,6-beta-glucan of the outer cell wall layer.

The protein localises to the secreted. It is found in the cell wall. It localises to the membrane. Its function is as follows. Probable GPI-anchored cell wall protein that may be involved in cell wall organization, hyphal growth, as well as in virulence. This Candida albicans (strain SC5314 / ATCC MYA-2876) (Yeast) protein is Probable cell wall protein PGA41 (PGA41).